Consider the following 191-residue polypeptide: 3-isopropylmalate dehydratase small subunit (191 aa).

It belongs to the LeuD family. LeuD type 1 subfamily. In terms of assembly, heterodimer of LeuC and LeuD.

It catalyses the reaction (2R,3S)-3-isopropylmalate = (2S)-2-isopropylmalate. The protein operates within amino-acid biosynthesis; L-leucine biosynthesis; L-leucine from 3-methyl-2-oxobutanoate: step 2/4. Its function is as follows. Catalyzes the isomerization between 2-isopropylmalate and 3-isopropylmalate, via the formation of 2-isopropylmaleate. The protein is 3-isopropylmalate dehydratase small subunit of Solibacter usitatus (strain Ellin6076).